We begin with the raw amino-acid sequence, 594 residues long: Elongation factor 4 (594 aa).

The region spanning 2 to 184 (KNIRNFSIIA…TIVAKVPAPE (183 aa)) is the tr-type G domain. GTP contacts are provided by residues 14–19 (DHGKST) and 131–134 (NKID).

Belongs to the TRAFAC class translation factor GTPase superfamily. Classic translation factor GTPase family. LepA subfamily.

It is found in the cell inner membrane. It carries out the reaction GTP + H2O = GDP + phosphate + H(+). Required for accurate and efficient protein synthesis under certain stress conditions. May act as a fidelity factor of the translation reaction, by catalyzing a one-codon backward translocation of tRNAs on improperly translocated ribosomes. Back-translocation proceeds from a post-translocation (POST) complex to a pre-translocation (PRE) complex, thus giving elongation factor G a second chance to translocate the tRNAs correctly. Binds to ribosomes in a GTP-dependent manner. The protein is Elongation factor 4 of Francisella tularensis subsp. holarctica (strain FTNF002-00 / FTA).